The following is a 75-amino-acid chain: ATP synthase subunit c (75 aa).

2 consecutive transmembrane segments (helical) span residues 12 to 32 (LASI…GIVV) and 49 to 69 (LTVL…IGIG).

This sequence belongs to the ATPase C chain family. As to quaternary structure, F-type ATPases have 2 components, F(1) - the catalytic core - and F(0) - the membrane proton channel. F(1) has five subunits: alpha(3), beta(3), gamma(1), delta(1), epsilon(1). F(0) has three main subunits: a(1), b(2) and c(10-14). The alpha and beta chains form an alternating ring which encloses part of the gamma chain. F(1) is attached to F(0) by a central stalk formed by the gamma and epsilon chains, while a peripheral stalk is formed by the delta and b chains.

It localises to the cell membrane. In terms of biological role, f(1)F(0) ATP synthase produces ATP from ADP in the presence of a proton or sodium gradient. F-type ATPases consist of two structural domains, F(1) containing the extramembraneous catalytic core and F(0) containing the membrane proton channel, linked together by a central stalk and a peripheral stalk. During catalysis, ATP synthesis in the catalytic domain of F(1) is coupled via a rotary mechanism of the central stalk subunits to proton translocation. Its function is as follows. Key component of the F(0) channel; it plays a direct role in translocation across the membrane. A homomeric c-ring of between 10-14 subunits forms the central stalk rotor element with the F(1) delta and epsilon subunits. In Tropheryma whipplei (strain TW08/27) (Whipple's bacillus), this protein is ATP synthase subunit c.